Consider the following 225-residue polypeptide: Small ribosomal subunit protein uS3 (225 aa).

A KH type-2 domain is found at I39–N109.

This sequence belongs to the universal ribosomal protein uS3 family. As to quaternary structure, part of the 30S ribosomal subunit. Forms a tight complex with proteins S10 and S14.

Its function is as follows. Binds the lower part of the 30S subunit head. Binds mRNA in the 70S ribosome, positioning it for translation. This Mycoplasma mobile (strain ATCC 43663 / 163K / NCTC 11711) (Mesomycoplasma mobile) protein is Small ribosomal subunit protein uS3.